Reading from the N-terminus, the 131-residue chain is Profilin (131 aa).

This sequence belongs to the profilin family. Occurs in many kinds of cells as a complex with monomeric actin in a 1:1 ratio.

Its subcellular location is the cytoplasm. The protein localises to the cytoskeleton. In terms of biological role, binds to actin and affects the structure of the cytoskeleton. At high concentrations, profilin prevents the polymerization of actin, whereas it enhances it at low concentrations. By binding to PIP2, it inhibits the formation of IP3 and DG. The protein is Profilin of Prunus avium (Cherry).